The chain runs to 418 residues: Putative methylthiotransferase jhp_0270 (418 aa).

The 109-residue stretch at K2–R110 folds into the MTTase N-terminal domain. Residues C11, C45, C74, C144, C148, and C151 each contribute to the [4Fe-4S] cluster site. The Radical SAM core domain occupies F130–A355.

Belongs to the methylthiotransferase family. Requires [4Fe-4S] cluster as cofactor.

This Helicobacter pylori (strain J99 / ATCC 700824) (Campylobacter pylori J99) protein is Putative methylthiotransferase jhp_0270.